The chain runs to 431 residues: MNTLDWTQLTADARTQALTRPVQTVATQTREAVATLIADVRARGDVALREITARFDGVTLDSFAVSEAEFAAADAAIAPELRQAMQDAVARIDTFHRAGMSEGYAVETAPGVVCEKIVRPIGRVGLYVPAGSAPLPSTALMLGVPARLAGCREVVLCTPPRKDGSVDPAVLVAAQLTGVRRVFKLGGAQAIAAMAYGTDSIPSCDKLFGPGNSFVTEAKQQVAQSGAAAIDMPAGPSEVLVIADAGAQPAFVAADLLSQAEHGPDSQVLLLSDSDALIAAVQEQLDLQLAQLSRADIARQALAQSRLIKVATLQEAFEISNRYAPEHLILALREPRAWLAQVEAAGSVFLGDYTPEALGDYCSGTNHVLPTSGAARAYSGVSVASFQNMVSVQAASKAGIDGIGACALILARAEGLDAHANAVALRMGVAA.

Positions 127, 189, and 212 each coordinate NAD(+). Substrate is bound by residues Ser237, Gln259, and His262. Zn(2+) contacts are provided by Gln259 and His262. Active-site proton acceptor residues include Glu326 and His327. Substrate-binding residues include His327, Asp360, Glu414, and His419. Asp360 contributes to the Zn(2+) binding site. Position 419 (His419) interacts with Zn(2+).

This sequence belongs to the histidinol dehydrogenase family. Zn(2+) is required as a cofactor.

The enzyme catalyses L-histidinol + 2 NAD(+) + H2O = L-histidine + 2 NADH + 3 H(+). It participates in amino-acid biosynthesis; L-histidine biosynthesis; L-histidine from 5-phospho-alpha-D-ribose 1-diphosphate: step 9/9. Functionally, catalyzes the sequential NAD-dependent oxidations of L-histidinol to L-histidinaldehyde and then to L-histidine. This Xanthomonas campestris pv. campestris (strain 8004) protein is Histidinol dehydrogenase.